A 116-amino-acid polypeptide reads, in one-letter code: Large ribosomal subunit protein eL18 (116 aa).

This sequence belongs to the eukaryotic ribosomal protein eL18 family. In terms of assembly, part of the 50S ribosomal subunit. Interacts weakly with proteins L4 and L15. Has been cross-linked to L4.

Its function is as follows. Stabilizes the tertiary rRNA structure within the 23S rRNA domain (domain II) to which it binds. This is Large ribosomal subunit protein eL18 (rpl18e) from Haloarcula marismortui (strain ATCC 43049 / DSM 3752 / JCM 8966 / VKM B-1809) (Halobacterium marismortui).